The following is a 657-amino-acid chain: KNR4/SMI1 homolog (657 aa).

Disordered regions lie at residues 168–193 (EQQQ…QKGY), 366–402 (SSSV…ESVS), and 416–657 (LTQT…TVAL). Residues 174–187 (KSSSELPQTVTPQA) are compositionally biased toward polar residues. Polar residues predominate over residues 416-436 (LTQTDASSKGTTKPATPNPMT). Low complexity-rich tracts occupy residues 444–455 (STPGSPSAAAEA) and 473–482 (TPTVTKESTP). Over residues 492-504 (LDSKNTETNEDTR) the composition is skewed to basic and acidic residues. Residues 505–521 (ATNTAHSMAPTVSSAIT) are compositionally biased toward polar residues. 3 stretches are compositionally biased toward basic and acidic residues: residues 535–561 (KPKD…KANE), 569–604 (VEPK…EKKV), and 627–650 (KSDK…KLNE).

This sequence belongs to the KNR4/SMI1 family.

The sequence is that of KNR4/SMI1 homolog from Eremothecium gossypii (strain ATCC 10895 / CBS 109.51 / FGSC 9923 / NRRL Y-1056) (Yeast).